Reading from the N-terminus, the 516-residue chain is Protein P54 (516 aa).

Residues 1-27 form the signal peptide; the sequence is MKKSLLSAVMLSSIALTAVGSPIAAAA. Positions 208-397 are disordered; it reads ATAEDKKADL…PAPAPAPNPS (190 aa). Basic and acidic residues predominate over residues 210 to 236; it reads AEDKKADLNRKKAEAEAEQARIREQAR. Composition is skewed to low complexity over residues 237–247 and 257–380; these read LAEQARQQAAQ and QAAA…TVTP. The span at 381–395 shows a compositional bias: pro residues; the sequence is APTPTPTPAPAPAPN. The NlpC/P60 domain maps to 399–516; that stretch reads SVNGAAIVAE…WYTPDFAVSM (118 aa). C429 serves as the catalytic Nucleophile. Residue H480 is the Proton acceptor of the active site. H492 is an active-site residue.

The protein belongs to the peptidase C40 family.

Its subcellular location is the secreted. The protein localises to the cell wall. This is Protein P54 from Enterococcus faecium (Streptococcus faecium).